The sequence spans 451 residues: uncharacterized protein (451 aa).

In terms of domain architecture, TRAM spans 1–59; the sequence is MLHKNDIIETEISDISHEGMGIAKVDGFVFFVENALPGEIIKMRVLKLRKRIGYGKVEE. Gln-283, Tyr-312, Glu-333, and Asp-381 together coordinate S-adenosyl-L-methionine. The active-site Nucleophile is the Cys-408.

Belongs to the class I-like SAM-binding methyltransferase superfamily. RNA M5U methyltransferase family.

This is an uncharacterized protein from Streptococcus agalactiae serotype V (strain ATCC BAA-611 / 2603 V/R).